We begin with the raw amino-acid sequence, 192 residues long: dTTP/UTP pyrophosphatase (192 aa).

Aspartate 71 serves as the catalytic Proton acceptor.

Belongs to the Maf family. YhdE subfamily. Requires a divalent metal cation as cofactor.

It localises to the cytoplasm. The enzyme catalyses dTTP + H2O = dTMP + diphosphate + H(+). It carries out the reaction UTP + H2O = UMP + diphosphate + H(+). Its function is as follows. Nucleoside triphosphate pyrophosphatase that hydrolyzes dTTP and UTP. May have a dual role in cell division arrest and in preventing the incorporation of modified nucleotides into cellular nucleic acids. In Clostridium tetani (strain Massachusetts / E88), this protein is dTTP/UTP pyrophosphatase.